The sequence spans 241 residues: DnaA regulatory inactivator Hda (241 aa).

The protein belongs to the DnaA family. HdA subfamily. In terms of assembly, the active form seems to be an ADP-bound monomer. Forms the RIDA complex (regulatory inactivation of DnaA) of ATP-DnaA, ADP-Hda and the DNA-loaded beta sliding clamp (dnaN).

In terms of biological role, mediates the interaction of DNA replication initiator protein DnaA with DNA polymerase subunit beta sliding clamp (dnaN). Stimulates hydrolysis of ATP-DnaA to ADP-DnaA, rendering DnaA inactive for reinitiation, a process called regulatory inhibition of DnaA or RIDA. The sequence is that of DnaA regulatory inactivator Hda from Salmonella paratyphi A (strain ATCC 9150 / SARB42).